The primary structure comprises 240 residues: Predicted GPI-anchored protein 58 (240 aa).

The first 18 residues, 1–18 (MQFSTLVSLAAVIVSTNA), serve as a signal peptide directing secretion. Residues 41 to 216 (HTNCPASSPA…NSTGPSSVPT (176 aa)) form a disordered region. Residues 51 to 86 (TPAPAPSASAPAPPAPEQPEPSAPAPAPSAPAPEQP) are compositionally biased toward pro residues. The segment covering 87–103 (EQPATPATPAAPATPAT) has biased composition (low complexity). Pro residues-rich tracts occupy residues 104 to 137 (PAAP…PEQP) and 153 to 192 (APAP…PAPS). The segment covering 193 to 216 (APASVPEQPASSVSNSTGPSSVPT) has biased composition (low complexity). Asn-207 carries an N-linked (GlcNAc...) asparagine glycan. Gly-219 carries the GPI-anchor amidated glycine lipid modification. Positions 220 to 240 (AAAKQYITGSVAVIAAALLAL) are cleaved as a propeptide — removed in mature form.

The protein localises to the cell membrane. This is Predicted GPI-anchored protein 58 (PGA58) from Candida albicans (strain SC5314 / ATCC MYA-2876) (Yeast).